The sequence spans 507 residues: Steroid 17-alpha-hydroxylase/17,20 lyase (507 aa).

Cys-441 is a binding site for heme.

It belongs to the cytochrome P450 family. Requires heme as cofactor.

The protein localises to the endoplasmic reticulum membrane. Its subcellular location is the microsome membrane. It carries out the reaction a C21-steroid + reduced [NADPH--hemoprotein reductase] + O2 = a 17alpha-hydroxy-C21-steroid + oxidized [NADPH--hemoprotein reductase] + H2O + H(+). It catalyses the reaction progesterone + reduced [NADPH--hemoprotein reductase] + O2 = 17alpha-hydroxyprogesterone + oxidized [NADPH--hemoprotein reductase] + H2O + H(+). The catalysed reaction is pregnenolone + reduced [NADPH--hemoprotein reductase] + O2 = 17alpha-hydroxypregnenolone + oxidized [NADPH--hemoprotein reductase] + H2O + H(+). The enzyme catalyses 17alpha-hydroxyprogesterone + reduced [NADPH--hemoprotein reductase] + O2 = androst-4-ene-3,17-dione + acetate + oxidized [NADPH--hemoprotein reductase] + H2O + 2 H(+). It carries out the reaction 17alpha-hydroxyprogesterone + reduced [NADPH--hemoprotein reductase] + O2 = 16alpha,17alpha-dihydroxyprogesterone + oxidized [NADPH--hemoprotein reductase] + H2O + H(+). It catalyses the reaction 16alpha,17alpha-dihydroxyprogesterone + reduced [NADPH--hemoprotein reductase] + O2 = 6beta,16alpha,17alpha-trihydroxyprogesterone + oxidized [NADPH--hemoprotein reductase] + H2O + H(+). The catalysed reaction is 17alpha-hydroxypregnenolone + reduced [NADPH--hemoprotein reductase] + O2 = 3beta-hydroxyandrost-5-en-17-one + acetate + oxidized [NADPH--hemoprotein reductase] + H2O + 2 H(+). The enzyme catalyses 16alpha,17alpha-dihydroxypregnenolone + reduced [NADPH--hemoprotein reductase] + O2 = 3beta,16alpha-dihydroxy-androst-5-en-17-one + acetate + oxidized [NADPH--hemoprotein reductase] + H2O + 2 H(+). It carries out the reaction 3beta-hydroxyandrost-5-en-17-one + reduced [NADPH--hemoprotein reductase] + O2 = 3beta,16alpha-dihydroxy-androst-5-en-17-one + oxidized [NADPH--hemoprotein reductase] + H2O + H(+). It catalyses the reaction androst-4-ene-3,17-dione + reduced [NADPH--hemoprotein reductase] + O2 = 16alpha-hydroxyandrost-4-ene-3,17-dione + oxidized [NADPH--hemoprotein reductase] + H2O + H(+). The protein operates within steroid hormone biosynthesis. Its pathway is steroid biosynthesis; glucocorticoid biosynthesis. With respect to regulation, regulated predominantly by intracellular cAMP levels. The 17,20-lyase activity is stimulated by cytochrome b5, which acts as an allosteric effector increasing the Vmax of the lyase activity. In terms of biological role, a cytochrome P450 monooxygenase involved in corticoid and androgen biosynthesis. Catalyzes 17-alpha hydroxylation of C21 steroids, which is common for both pathways. A second oxidative step, required only for androgen synthesis, involves an acyl-carbon cleavage. The 17-alpha hydroxy intermediates, as part of adrenal glucocorticoids biosynthesis pathway, are precursors of cortisol. Hydroxylates steroid hormones, pregnenolone and progesterone to form 17-alpha hydroxy metabolites, followed by the cleavage of the C17-C20 bond to form C19 steroids, dehydroepiandrosterone (DHEA) and androstenedione. Has 16-alpha hydroxylase activity. Catalyzes 16-alpha hydroxylation of 17-alpha hydroxy pregnenolone, followed by the cleavage of the C17-C20 bond to form 16-alpha-hydroxy DHEA. Also 16-alpha hydroxylates androgens, relevant for estriol synthesis. Mechanistically, uses molecular oxygen inserting one oxygen atom into a substrate, and reducing the second into a water molecule, with two electrons provided by NADPH via cytochrome P450 reductase (CPR; NADPH-ferrihemoprotein reductase). This Rattus norvegicus (Rat) protein is Steroid 17-alpha-hydroxylase/17,20 lyase (Cyp17a1).